We begin with the raw amino-acid sequence, 385 residues long: S-adenosylmethionine synthase (385 aa).

Residue His-16 participates in ATP binding. Asp-18 is a Mg(2+) binding site. Glu-44 is a binding site for K(+). Glu-57 and Gln-100 together coordinate L-methionine. The tract at residues Gln-100–Lys-110 is flexible loop. ATP is bound by residues Asp-165–Lys-167, Arg-231–Phe-232, Asp-240, Arg-246–Lys-247, Ala-263, and Lys-267. Asp-240 provides a ligand contact to L-methionine. Lys-271 is a binding site for L-methionine.

Belongs to the AdoMet synthase family. In terms of assembly, homotetramer; dimer of dimers. Mg(2+) is required as a cofactor. K(+) serves as cofactor.

The protein localises to the cytoplasm. It catalyses the reaction L-methionine + ATP + H2O = S-adenosyl-L-methionine + phosphate + diphosphate. The protein operates within amino-acid biosynthesis; S-adenosyl-L-methionine biosynthesis; S-adenosyl-L-methionine from L-methionine: step 1/1. Functionally, catalyzes the formation of S-adenosylmethionine (AdoMet) from methionine and ATP. The overall synthetic reaction is composed of two sequential steps, AdoMet formation and the subsequent tripolyphosphate hydrolysis which occurs prior to release of AdoMet from the enzyme. This chain is S-adenosylmethionine synthase, found in Vibrio cholerae serotype O1 (strain ATCC 39541 / Classical Ogawa 395 / O395).